The primary structure comprises 508 residues: ATP synthase subunit alpha, chloroplastic (508 aa).

Residue 172 to 179 (GDRQTGKT) participates in ATP binding.

Belongs to the ATPase alpha/beta chains family. In terms of assembly, F-type ATPases have 2 components, CF(1) - the catalytic core - and CF(0) - the membrane proton channel. CF(1) has five subunits: alpha(3), beta(3), gamma(1), delta(1), epsilon(1). CF(0) has four main subunits: a, b, b' and c.

Its subcellular location is the plastid. The protein resides in the chloroplast thylakoid membrane. It catalyses the reaction ATP + H2O + 4 H(+)(in) = ADP + phosphate + 5 H(+)(out). In terms of biological role, produces ATP from ADP in the presence of a proton gradient across the membrane. The alpha chain is a regulatory subunit. This Angiopteris evecta (Mule's foot fern) protein is ATP synthase subunit alpha, chloroplastic.